The sequence spans 464 residues: Argininosuccinate lyase (464 aa).

Belongs to the lyase 1 family. Argininosuccinate lyase subfamily.

The protein resides in the cytoplasm. The enzyme catalyses 2-(N(omega)-L-arginino)succinate = fumarate + L-arginine. Its pathway is amino-acid biosynthesis; L-arginine biosynthesis; L-arginine from L-ornithine and carbamoyl phosphate: step 3/3. The sequence is that of Argininosuccinate lyase from Sulfurovum sp. (strain NBC37-1).